Reading from the N-terminus, the 114-residue chain is Large ribosomal subunit protein uL22c (114 aa).

Belongs to the universal ribosomal protein uL22 family. Part of the 50S ribosomal subunit.

The protein localises to the plastid. The protein resides in the cyanelle. This protein binds specifically to 23S rRNA. Its function is as follows. The globular domain of the protein is located near the polypeptide exit tunnel on the outside of the subunit, while an extended beta-hairpin is found that lines the wall of the exit tunnel in the center of the 70S ribosome. In Cyanophora paradoxa, this protein is Large ribosomal subunit protein uL22c (rpl22).